A 1679-amino-acid chain; its full sequence is GRIP and coiled-coil domain-containing protein 2 (1679 aa).

Methionine 1 bears the N-acetylmethionine mark. 2 disordered regions span residues 1–23 and 1466–1522; these read MEDS…KLET and LKSE…SAGT. Positions 35–1469 form a coiled coil; that stretch reads KQMMLLQKAK…ETQLFQLKSE (1435 aa). Residues serine 1474 and serine 1478 each carry the phosphoserine modification. The span at 1474 to 1483 shows a compositional bias: polar residues; it reads SPASSHQPSK. Positions 1569 to 1608 are mediates interaction with RAB6A; it reads HLNGLLRETEATNAILMEQIKLLKSEIRRLERNQEREKSV. The mediates interaction with RAB9A stretch occupies residues 1569–1679; the sequence is HLNGLLRETE…SYLHSWSGLR (111 aa). In terms of domain architecture, GRIP spans 1604–1654; the sequence is REKSVANLEYLKNVLLRFIFLKPGSERERLLPVIDTMLQLSPEEKGKLATV.

As to quaternary structure, homodimer. Interacts (via GRIP domain) with RAB6A (preferentially in its GTP-bound form). May interact (RAB6A-dependent) with ARL1; might be involved in GCC2 Golgi localization. Interacts with CLASP1 and CLASP2; recruits both proteins to membranes of the TGN. Interacts with STX16. Interacts (probably via GRIP domain) with RAB9A (preferentially in its GTP-bound form).

The protein resides in the cytoplasm. The protein localises to the golgi apparatus. Its subcellular location is the trans-Golgi network membrane. In terms of biological role, golgin which probably tethers transport vesicles to the trans-Golgi network (TGN) and regulates vesicular transport between the endosomes and the Golgi. As a RAB9A effector it is involved in recycling of the mannose 6-phosphate receptor from the late endosomes to the TGN. May also play a role in transport between the recycling endosomes and the Golgi. Required for maintenance of the Golgi structure, it is involved in the biogenesis of noncentrosomal, Golgi-associated microtubules through recruitment of CLASP1 and CLASP2. The chain is GRIP and coiled-coil domain-containing protein 2 (Gcc2) from Rattus norvegicus (Rat).